The sequence spans 191 residues: uncharacterized protein (191 aa).

This sequence to B.subtilis GlpP.

This is an uncharacterized protein from Escherichia coli (strain K12).